We begin with the raw amino-acid sequence, 116 residues long: Cysteine proteinase inhibitor 1 (116 aa).

The N-terminal stretch at 1–26 (MVPKPLSLLLFLLLALSAAVVGGRKL) is a signal peptide. Positions 30–89 (GGWRPIESLNSAEVQDVAQFAVSEHNKQANDELQYQSVVRGYTQVVAGTNYRLVIAAKDG) constitute a Cystatin domain. The Secondary area of contact motif lies at 73–77 (QVVAG). The N-linked (GlcNAc...) asparagine glycan is linked to asparagine 109.

Belongs to the cystatin family. Phytocystatin subfamily. In terms of processing, glycosylated.

It localises to the secreted. Functionally, specific inhibitor of papain family cysteine proteinases. Inhibits papain, chymopapain, bromelain, ficin, human cathepsins B, H and L, actinidain and house dustmite endopeptidase 1, but does not inhibit human bleomycin hydrolase. Inhibits papain with an IC(50) of 2.47 nM. Does not inhibit cysteine proteinases belonging to other families including clostripain, streptopain and calpain. This is Cysteine proteinase inhibitor 1 from Actinidia deliciosa (Kiwi).